Consider the following 303-residue polypeptide: UPF0282 protein MM_2966 (303 aa).

This sequence belongs to the UPF0282 family.

The chain is UPF0282 protein MM_2966 from Methanosarcina mazei (strain ATCC BAA-159 / DSM 3647 / Goe1 / Go1 / JCM 11833 / OCM 88) (Methanosarcina frisia).